The chain runs to 253 residues: Solute carrier family 66 member 2 (253 aa).

6 helical membrane passes run 7–27 (GWLL…AMVF), 49–69 (FSTY…LFWF), 72–92 (HFES…LLML), 125–145 (FADY…ITYL), 150–170 (ALFV…LGVP), and 214–234 (VCGL…YVFT). The PQ-loop 1 domain maps to 14–80 (HQLVSWGAAG…RHFESPLLWQ (67 aa)). The region spanning 160 to 215 (AVLTEAMLGVPQLYRNHRHQSTEGMSIKMVLMWTSGDTFKTAYFLLNGAPLQFSVC) is the PQ-loop 2 domain.

It is found in the membrane. The protein is Solute carrier family 66 member 2 (SLC66A2) of Bos taurus (Bovine).